A 251-amino-acid polypeptide reads, in one-letter code: Small ribosomal subunit protein uS2 (251 aa).

It belongs to the universal ribosomal protein uS2 family.

The polypeptide is Small ribosomal subunit protein uS2 (Cereibacter sphaeroides (strain ATCC 17029 / ATH 2.4.9) (Rhodobacter sphaeroides)).